The chain runs to 1483 residues: Ubiquitin fusion degradation protein 4 (1483 aa).

The segment at 1 to 117 (MSENNSHNLD…NNEFGSNPLH (117 aa)) is disordered. Basic and acidic residues predominate over residues 8–18 (NLDEHESHSEN). A compositionally biased stretch (acidic residues) spans 61–70 (EADDGEDDDN). Position 87 is a phosphothreonine (threonine 87). Lysine 349 participates in a covalent cross-link: Glycyl lysine isopeptide (Lys-Gly) (interchain with G-Cter in ubiquitin). Positions 1007–1081 (CGVKSDSFIN…LIQLWKNKSK (75 aa)) are K-box. An HECT domain is found at 1376–1483 (AEHGYTMDSS…EEGAGAFLLS (108 aa)). Cysteine 1450 serves as the catalytic Glycyl thioester intermediate.

It belongs to the UPL family. K-HECT subfamily.

It carries out the reaction S-ubiquitinyl-[E2 ubiquitin-conjugating enzyme]-L-cysteine + [acceptor protein]-L-lysine = [E2 ubiquitin-conjugating enzyme]-L-cysteine + N(6)-ubiquitinyl-[acceptor protein]-L-lysine.. In terms of biological role, E3 ubiquitin-protein ligase which accepts ubiquitin from an E2 ubiquitin-conjugating enzyme in the form of a thioester and then directly transfers the ubiquitin to targeted substrates. The chain is Ubiquitin fusion degradation protein 4 (UFD4) from Saccharomyces cerevisiae (strain ATCC 204508 / S288c) (Baker's yeast).